The following is a 60-amino-acid chain: Large ribosomal subunit protein bL32 (60 aa).

The segment covering 1-20 (MACPKKKTSKSKRSMRRAAW) has biased composition (basic residues). Residues 1–22 (MACPKKKTSKSKRSMRRAAWKR) form a disordered region.

This sequence belongs to the bacterial ribosomal protein bL32 family.

This is Large ribosomal subunit protein bL32 from Thermosynechococcus vestitus (strain NIES-2133 / IAM M-273 / BP-1).